Reading from the N-terminus, the 260-residue chain is Magnesium dechelatase SGRL, chloroplastic (260 aa).

The transit peptide at 1–45 (MACYIVPYYHHPVLSHPNREIFSHRHHHHHRFCNNLLNRRISVPR) directs the protein to the chloroplast.

Belongs to the staygreen family. Interacts with the light harvesting complex II (LHCII). Interacts with the chlorophyll catabolic enzymes (CCEs) NYC1, NOL, PAO and RCCR. As to expression, expressed in cotyledons, pollen and young leaves.

It localises to the plastid. The protein resides in the chloroplast thylakoid. The enzyme catalyses chlorophyllide a + 2 H(+) = pheophorbide a + Mg(2+). Its function is as follows. Magnesium chelatase involved in chlorophyll a degradation in the chlorophyll-protein complexes of photosystem I (PSI) and photosystem II (PSII). Contributes to the degradation of PSI and PSII in the thylakoid membranes. Recombinant SGRL possesses high dechelating activity against chlorophyllide a, very low activity against chlorophyll a, and no activity against chlorophyll b. Contributes to abiotic stress-induced chlorophyll degradation and leaf yellowing during vegetative plant growth. The polypeptide is Magnesium dechelatase SGRL, chloroplastic (Arabidopsis thaliana (Mouse-ear cress)).